The primary structure comprises 213 residues: Ribonuclease Oy (213 aa).

Residue His-35 is part of the active site. Cys-51 and Cys-96 are disulfide-bonded. Residue Asn-52 is glycosylated (N-linked (GlcNAc...) asparagine). Residues Glu-89 and His-93 contribute to the active site. N-linked (GlcNAc...) asparagine glycans are attached at residues Asn-121 and Asn-142. Intrachain disulfides connect Cys-160-Cys-198 and Cys-178-Cys-188.

Belongs to the RNase T2 family.

The protein resides in the secreted. Its function is as follows. Releases mononucleotides from RNA in the order of 3'-GMP, 3'-AMP and 3'-UMP. The sequence is that of Ribonuclease Oy from Magallana gigas (Pacific oyster).